We begin with the raw amino-acid sequence, 249 residues long: tRNA 2'-phosphotransferase 1 (249 aa).

N-acetylmethionine is present on Met1. 2 disordered regions span residues 1–25 (MNAP…RNVQ) and 220–249 (KPLS…KIQQ).

Belongs to the KptA/TPT1 family.

It catalyses the reaction 2'-phospho-[ligated tRNA] + NAD(+) = mature tRNA + ADP-alpha-D-ribose 1'',2''-cyclic phosphate + nicotinamide. Its function is as follows. Catalyzes the last step of tRNA splicing, the transfer of the splice junction 2'-phosphate from ligated tRNA to NAD to produce ADP-ribose 1''-2'' cyclic phosphate. The chain is tRNA 2'-phosphotransferase 1 (Trpt1) from Mus musculus (Mouse).